The primary structure comprises 90 residues: MSEEKIEVKETDMEDPQRDMVISVVREAQRLYNIDKDVAAFVKEELDKKFGATWHVICGKCFGSRVSYEMGHFILLKCNKVNVMIYKCGY.

Belongs to the dynein light chain family.

The protein resides in the cytoplasm. It localises to the cytoskeleton. Acts as one of several non-catalytic accessory components of a dynein complex. The polypeptide is Probable dynein light chain 2, cytoplasmic (dlc-2) (Caenorhabditis elegans).